A 199-amino-acid polypeptide reads, in one-letter code: Patulin biosynthesis cluster protein F (199 aa).

An N-terminal signal peptide occupies residues 1 to 21 (MKSSLWVSLAVSLIGLGPAAA). Asn-129 and Asn-183 each carry an N-linked (GlcNAc...) asparagine glycan.

The protein belongs to the patF family.

It localises to the cytoplasm. Its subcellular location is the cytosol. The catalysed reaction is phyllostine = neopatulin. The protein operates within mycotoxin biosynthesis; patulin biosynthesis. In terms of biological role, part of the gene cluster that mediates the biosynthesis of patulin, an acetate-derived tetraketide mycotoxin produced by several fungal species that shows antimicrobial properties against several bacteria. PatF catalyzes the conversion of phyllostine into neopatulin. The pathway begins with the synthesis of 6-methylsalicylic acid by the polyketide synthase (PKS) patK via condensation of acetate and malonate units. The 6-methylsalicylic acid decarboxylase patG then catalyzes the decarboxylation of 6-methylsalicylic acid to yield m-cresol (also known as 3-methylphenol). These first reactions occur in the cytosol. The intermediate m-cresol is then transported into the endoplasmic reticulum where the cytochrome P450 monooxygenase patH converts it to m-hydroxybenzyl alcohol, which is further converted to gentisyl alcohol by the cytochrome P450 monooxygenase patI. The oxidoreductases patJ and patO further convert gentisyl alcohol to isoepoxydon in the vacuole. PatN catalyzes then the transformation of isoepoxydon into phyllostine. The cluster protein patF is responsible for the conversion from phyllostine to neopatulin whereas the alcohol dehydrogenase patD converts neopatulin to E-ascladiol. The steps between isoepoxydon and E-ascladiol occur in the cytosol, and E-ascladiol is probably secreted to the extracellular space by one of the cluster-specific transporters patC or patM. Finally, the secreted patulin synthase patE catalyzes the conversion of E-ascladiol to patulin. This chain is Patulin biosynthesis cluster protein F, found in Penicillium expansum (Blue mold rot fungus).